We begin with the raw amino-acid sequence, 727 residues long: NADH-ubiquinone oxidoreductase 75 kDa subunit, mitochondrial (727 aa).

A mitochondrion-targeting transit peptide spans 1-23 (MLRIPVKRALIGLSKSPKGYVRS). A 2Fe-2S ferredoxin-type domain is found at 30 to 108 (NLIEVFVDGQ…GWNILTNSEK (79 aa)). Residues Cys-64, Cys-75, and Cys-78 each contribute to the [2Fe-2S] cluster site. Lys-84 carries the post-translational modification N6-acetyllysine. Cys-92 provides a ligand contact to [2Fe-2S] cluster. The 4Fe-4S His(Cys)3-ligated-type domain maps to 108–147 (KSKKAREGVMEFLLANHPLDCPICDQGGECDLQDQSMMFG). The [4Fe-4S] cluster site is built by His-124, Cys-128, Cys-131, Cys-137, Cys-176, Cys-179, Cys-182, and Cys-226. Positions 245-301 (TRKTESIDVMDAVGSNIVVSTRTGEVMRILPRMHEDINEEWISDKTRFAYDGLKRQR) constitute a 4Fe-4S Mo/W bis-MGD-type domain. N6-acetyllysine is present on residues Lys-499 and Lys-709.

Belongs to the complex I 75 kDa subunit family. Core subunit of respiratory chain NADH dehydrogenase (Complex I) which is composed of 45 different subunits. This is the largest subunit of complex I and it is a component of the iron-sulfur (IP) fragment of the enzyme. Complex I associates with ubiquinol-cytochrome reductase complex (Complex III) to form supercomplexes. Interacts with MDM2 and AKAP1. [2Fe-2S] cluster is required as a cofactor. Requires [4Fe-4S] cluster as cofactor.

It is found in the mitochondrion inner membrane. It carries out the reaction a ubiquinone + NADH + 5 H(+)(in) = a ubiquinol + NAD(+) + 4 H(+)(out). Core subunit of the mitochondrial membrane respiratory chain NADH dehydrogenase (Complex I) which catalyzes electron transfer from NADH through the respiratory chain, using ubiquinone as an electron acceptor. Essential for catalysing the entry and efficient transfer of electrons within complex I. Plays a key role in the assembly and stability of complex I and participates in the association of complex I with ubiquinol-cytochrome reductase complex (Complex III) to form supercomplexes. The chain is NADH-ubiquinone oxidoreductase 75 kDa subunit, mitochondrial (Ndufs1) from Rattus norvegicus (Rat).